Consider the following 150-residue polypeptide: Probable antibacterial peptide (150 aa).

The signal sequence occupies residues 1 to 19 (MHIARFCLLSSMAVLALSA).

It localises to the secreted. Has antibacterial activity in vitro. In Riptortus clavatus (Bean bug), this protein is Probable antibacterial peptide.